Here is a 544-residue protein sequence, read N- to C-terminus: Chaperonin GroEL (544 aa).

Residues 29 to 32, 86 to 90, glycine 413, 476 to 478, and aspartate 492 contribute to the ATP site; these read TLGP, DGTTT, and NAA.

It belongs to the chaperonin (HSP60) family. As to quaternary structure, forms a cylinder of 14 subunits composed of two heptameric rings stacked back-to-back. Interacts with the co-chaperonin GroES.

The protein localises to the cytoplasm. The enzyme catalyses ATP + H2O + a folded polypeptide = ADP + phosphate + an unfolded polypeptide.. Together with its co-chaperonin GroES, plays an essential role in assisting protein folding. The GroEL-GroES system forms a nano-cage that allows encapsulation of the non-native substrate proteins and provides a physical environment optimized to promote and accelerate protein folding. This Bacillus cereus (strain G9842) protein is Chaperonin GroEL.